Here is a 525-residue protein sequence, read N- to C-terminus: GMP synthase [glutamine-hydrolyzing] (525 aa).

The Glutamine amidotransferase type-1 domain occupies 9–207 (RILILDFGSQ…VRDICQCEAL (199 aa)). Cysteine 86 serves as the catalytic Nucleophile. Active-site residues include histidine 181 and glutamate 183. The 193-residue stretch at 208-400 (WTPAKIIDDA…LGLPYDMLYR (193 aa)) folds into the GMPS ATP-PPase domain. Position 235-241 (235-241 (SGGVDSS)) interacts with ATP.

In terms of assembly, homodimer.

It carries out the reaction XMP + L-glutamine + ATP + H2O = GMP + L-glutamate + AMP + diphosphate + 2 H(+). Its pathway is purine metabolism; GMP biosynthesis; GMP from XMP (L-Gln route): step 1/1. Catalyzes the synthesis of GMP from XMP. In Salmonella schwarzengrund (strain CVM19633), this protein is GMP synthase [glutamine-hydrolyzing].